The primary structure comprises 301 residues: Acetylglutamate kinase (301 aa).

Substrate-binding positions include 68–69 (GG), arginine 90, and asparagine 195.

Belongs to the acetylglutamate kinase family. ArgB subfamily.

The protein localises to the cytoplasm. It carries out the reaction N-acetyl-L-glutamate + ATP = N-acetyl-L-glutamyl 5-phosphate + ADP. The protein operates within amino-acid biosynthesis; L-arginine biosynthesis; N(2)-acetyl-L-ornithine from L-glutamate: step 2/4. Its function is as follows. Catalyzes the ATP-dependent phosphorylation of N-acetyl-L-glutamate. The sequence is that of Acetylglutamate kinase from Ectopseudomonas mendocina (strain ymp) (Pseudomonas mendocina).